We begin with the raw amino-acid sequence, 513 residues long: MSYVLTETSAGYALLKASDKKIYKSSSLIMDLDSSEKVLKEFKIAAFSKFNSAANALEEASAIIEGKVSPQLEKLLDEIKKEKKATLIVSETKLANAINKLGLNFNVVSDAVTLDIYRAVKEYLPDLLPGMSDSDLSKMSLGLAHSIGRHKLKFSADKVDVMIIQAIALLDDLDKEVNTYSMRCKEWYGWHFPELAKIVTDSVAYARLILTMGVRSKAAETDMSEILPEEIEERVKAAAEVSMGTEITDVDLINIRALADQIVEFAAYREQLSNYLSSRMKAIAPNLTQLVGELVGARLIAHAGSLISLAKSPASTIQILGAEKALFRALKTKHDTPKYGLLYHASLVGQASGRNKGKIARVLAAKAAVALRYDALAEDRDDSGDIGLEVRAKVENRLSQIEGRDLRTTPKVVREAKKVEMTEARAYNADADTAAAADSDDEDEETEEKADKKRKRDTEEEEEEEETESKKSKKEKKEKKEKKDKKEKKEKKEKKDKKEKKEKKEKKEKKSKK.

Positions 283–403 (IAPNLTQLVG…VENRLSQIEG (121 aa)) constitute a Nop domain. The disordered stretch occupies residues 424–513 (ARAYNADADT…KEKKEKKSKK (90 aa)). Acidic residues predominate over residues 438-448 (DSDDEDEETEE). Over residues 471 to 513 (KSKKEKKEKKEKKDKKEKKEKKEKKDKKEKKEKKEKKEKKSKK) the composition is skewed to basic residues.

It belongs to the NOP5/NOP56 family.

Its subcellular location is the nucleus. The protein resides in the nucleolus. Its function is as follows. Required for pre-18S rRNA processing. May bind microtubules. The protein is Nucleolar protein 58 (NOP58) of Candida glabrata (strain ATCC 2001 / BCRC 20586 / JCM 3761 / NBRC 0622 / NRRL Y-65 / CBS 138) (Yeast).